We begin with the raw amino-acid sequence, 211 residues long: LexA repressor (211 aa).

The segment at residues 27–47 is a DNA-binding region (H-T-H motif); that stretch reads QTEIARAFGFKGVRAVQHHLD. Catalysis depends on for autocatalytic cleavage activity residues Ser131 and Lys168.

Belongs to the peptidase S24 family. In terms of assembly, homodimer.

It catalyses the reaction Hydrolysis of Ala-|-Gly bond in repressor LexA.. Its function is as follows. Represses a number of genes involved in the response to DNA damage (SOS response), including recA and lexA. In the presence of single-stranded DNA, RecA interacts with LexA causing an autocatalytic cleavage which disrupts the DNA-binding part of LexA, leading to derepression of the SOS regulon and eventually DNA repair. This is LexA repressor from Xylella fastidiosa (strain M23).